Here is a 568-residue protein sequence, read N- to C-terminus: Protein AF-9 (568 aa).

A YEATS domain is found at 1–138; that stretch reads MASSCAVQVK…EDFRRKLLKA (138 aa). Histone H3K9cr binding stretches follow at residues 78 to 80 and 106 to 108; these read YAG and LHL. A disordered region spans residues 138 to 475; the sequence is AGGDPNRSIH…PPPPLLKTNN (338 aa). Residues 149 to 190 are compositionally biased toward low complexity; it reads SSSSSSSSSSSSSSSSSSSSSSSSSSSSSSSSSSSSSSSSSS. Over residues 202–265 the composition is skewed to basic and acidic residues; it reads EHKEKPSKDS…PKPMSKEPKP (64 aa). A phosphoserine mark is found at S288 and S294. Positions 295–300 match the Nuclear localization signal motif; that stretch reads AKKRKK. Positions 303-313 are enriched in low complexity; sequence SEALFKSFSSA. The segment covering 322–349 has biased composition (basic and acidic residues); that stretch reads ADKKQIKDKSHVKMGKVKIESETSEKKK. A Glycyl lysine isopeptide (Lys-Gly) (interchain with G-Cter in SUMO2) cross-link involves residue K339. Over residues 357-368 the composition is skewed to acidic residues; the sequence is DIVDPNDSDVEE. A compositionally biased stretch (low complexity) spans 371–395; it reads SSKSDSEQPSPASSSSSSSSSFTPS. S412 and S419 each carry phosphoserine. Acidic residues predominate over residues 414 to 429; it reads DNEEESDEVEDNDNDS. Over residues 445 to 461 the composition is skewed to low complexity; that stretch reads VSLSDGSDSESSSASSP. Phosphoserine is present on S483.

As to quaternary structure, component of the super elongation complex (SEC), at least composed of EAF1, EAF2, CDK9, MLLT3/AF9, AFF (AFF1 or AFF4), the P-TEFb complex and ELL (ELL, ELL2 or ELL3). Interacts with BCOR. Interacts with CBX8. Interacts with ALKBH4. As to expression, enriched in undifferentiated hematopoietic stem cells in fetal liver, cord blood and bone marrow.

It is found in the nucleus. Its subcellular location is the chromosome. Its activity is regulated as follows. Crotonylated lysine binding is strongly inhibited by the peptide XL-07i, carrying a 2-furancarbonyl side chain and capped with a hydrophobic carboxybenzyl group. XL-07i targets the unique pi-pi-pi stacking interaction at the crotonylation recognition site. Its function is as follows. Chromatin reader component of the super elongation complex (SEC), a complex required to increase the catalytic rate of RNA polymerase II transcription by suppressing transient pausing by the polymerase at multiple sites along the DNA. Specifically recognizes and binds acylated histone H3, with a preference for histone H3 that is crotonylated. Crotonylation marks active promoters and enhancers and confers resistance to transcriptional repressors. Recognizes and binds histone H3 crotonylated at 'Lys-9' (H3K9cr), and with slightly lower affinity histone H3 crotonylated at 'Lys-18' (H3K18cr). Also recognizes and binds histone H3 acetylated and butyrylated at 'Lys-9' (H3K9ac and H3K9bu, respectively), but with lower affinity than crotonylated histone H3. In the SEC complex, MLLT3 is required to recruit the complex to crotonylated histones. Recruitment of the SEC complex to crotonylated histones promotes recruitment of DOT1L on active chromatin to deposit histone H3 'Lys-79' methylation (H3K79me). Plays a key role in hematopoietic stem cell (HSC) maintenance by preserving, rather than conferring, HSC stemness. Acts by binding to the transcription start site of active genes in HSCs and sustaining level of H3K79me2, probably by recruiting DOT1L. In Homo sapiens (Human), this protein is Protein AF-9.